The primary structure comprises 191 residues: Peptidyl-tRNA hydrolase (191 aa).

Residue tyrosine 17 participates in tRNA binding. Histidine 22 acts as the Proton acceptor in catalysis. 3 residues coordinate tRNA: tyrosine 68, asparagine 70, and asparagine 116.

This sequence belongs to the PTH family. As to quaternary structure, monomer.

Its subcellular location is the cytoplasm. It carries out the reaction an N-acyl-L-alpha-aminoacyl-tRNA + H2O = an N-acyl-L-amino acid + a tRNA + H(+). Its function is as follows. Hydrolyzes ribosome-free peptidyl-tRNAs (with 1 or more amino acids incorporated), which drop off the ribosome during protein synthesis, or as a result of ribosome stalling. In terms of biological role, catalyzes the release of premature peptidyl moieties from peptidyl-tRNA molecules trapped in stalled 50S ribosomal subunits, and thus maintains levels of free tRNAs and 50S ribosomes. The chain is Peptidyl-tRNA hydrolase from Mycobacterium marinum (strain ATCC BAA-535 / M).